A 217-amino-acid polypeptide reads, in one-letter code: Small ribosomal subunit protein uS3 (217 aa).

The 71-residue stretch at 40 to 110 folds into the KH type-2 domain; sequence IRDLINKGFN…EVYINIHEVR (71 aa).

It belongs to the universal ribosomal protein uS3 family. In terms of assembly, part of the 30S ribosomal subunit. Forms a tight complex with proteins S10 and S14.

Its function is as follows. Binds the lower part of the 30S subunit head. Binds mRNA in the 70S ribosome, positioning it for translation. The chain is Small ribosomal subunit protein uS3 from Rickettsia akari (strain Hartford).